The primary structure comprises 632 residues: Chaperone protein HtpG (632 aa).

The tract at residues 1–339 (MTQQTMSFQA…SSDLPLNVSR (339 aa)) is a; substrate-binding. Positions 340 to 559 (EILQESRDVK…DNDMSGYLQR (220 aa)) are b. The c stretch occupies residues 560-632 (MLKAAGQSAP…TNALLLSRAA (73 aa)).

It belongs to the heat shock protein 90 family. As to quaternary structure, homodimer.

The protein resides in the cytoplasm. Its function is as follows. Molecular chaperone. Has ATPase activity. In Burkholderia mallei (strain NCTC 10247), this protein is Chaperone protein HtpG.